The primary structure comprises 98 residues: NADH-ubiquinone oxidoreductase chain 4L (98 aa).

Transmembrane regions (helical) follow at residues 1-21 (MSLV…GLLM), 29-49 (ALLC…ITIL), and 59-79 (TPII…ALLV).

It belongs to the complex I subunit 4L family. Core subunit of respiratory chain NADH dehydrogenase (Complex I) which is composed of 45 different subunits.

It localises to the mitochondrion inner membrane. It carries out the reaction a ubiquinone + NADH + 5 H(+)(in) = a ubiquinol + NAD(+) + 4 H(+)(out). Its function is as follows. Core subunit of the mitochondrial membrane respiratory chain NADH dehydrogenase (Complex I) which catalyzes electron transfer from NADH through the respiratory chain, using ubiquinone as an electron acceptor. Part of the enzyme membrane arm which is embedded in the lipid bilayer and involved in proton translocation. This is NADH-ubiquinone oxidoreductase chain 4L (MT-ND4L) from Lipotes vexillifer (Yangtze river dolphin).